The primary structure comprises 392 residues: Protein O-glucosyltransferase 1 (392 aa).

A signal peptide spans Met-1–Gly-23. Disulfide bonds link Cys-49/Cys-56, Cys-54/Cys-357, Cys-102/Cys-108, and Cys-263/Cys-286. Asn-53 carries an N-linked (GlcNAc...) asparagine glycan. The tract at residues Met-103–Arg-107 is interaction with the consensus sequence C-X-S-X-[PA]-C in peptide substrates. The active-site Proton donor/acceptor is the Asp-133. The interaction with the consensus sequence C-X-S-X-[PA]-C in peptide substrates stretch occupies residues Ala-172–Pro-178. Residue Tyr-177 participates in UDP-alpha-D-glucose binding. Asn-204 is a glycosylation site (N-linked (GlcNAc...) asparagine). UDP-alpha-D-glucose contacts are provided by residues Ser-212, Arg-218, and Val-274–Arg-279. Asn-373 carries N-linked (GlcNAc...) asparagine glycosylation. The short motif at Lys-389–Leu-392 is the Prevents secretion from ER element.

The protein belongs to the glycosyltransferase 90 family.

The protein localises to the endoplasmic reticulum lumen. It carries out the reaction L-seryl-[EGF-like domain protein] + UDP-alpha-D-xylose = 3-O-(beta-D-xylosyl)-L-seryl-[EGF-like domain protein] + UDP + H(+). The catalysed reaction is L-seryl-[EGF-like domain protein] + UDP-alpha-D-glucose = 3-O-(beta-D-glucosyl)-L-seryl-[EGF-like domain protein] + UDP + H(+). It participates in protein modification; protein glycosylation. Functionally, dual specificity glycosyltransferase that catalyzes the transfer of glucose and xylose from UDP-glucose and UDP-xylose, respectively, to a serine residue found in the consensus sequence of C-X-S-X-P-C. Specifically targets extracellular EGF repeats of protein such as CRB2, F7, F9 and NOTCH2. Acts as a positive regulator of Notch signaling by mediating O-glucosylation of Notch, leading to regulate muscle development. Notch glucosylation does not affect Notch ligand binding. Required during early development to promote gastrulation: acts by mediating O-glucosylation of CRB2, which is required for CRB2 localization to the cell membrane. This is Protein O-glucosyltransferase 1 (Poglut1) from Rattus norvegicus (Rat).